Reading from the N-terminus, the 308-residue chain is Probable plastid-lipid-associated protein 9, chloroplastic (308 aa).

A chloroplast-targeting transit peptide spans 1–55 (MALIQHGSVSGTSAVRLSFSSSVSPPSSSPPLSRVSLNFQSEKKSCYRRMICRAM).

The protein belongs to the PAP/fibrillin family.

It localises to the plastid. It is found in the chloroplast. Its subcellular location is the plastoglobule. This is Probable plastid-lipid-associated protein 9, chloroplastic (PAP9) from Arabidopsis thaliana (Mouse-ear cress).